Consider the following 135-residue polypeptide: Ribonuclease P protein component (135 aa).

The segment at 115–135 (ETEPVSPVSPTSLPQNERGSP) is disordered. Positions 122–135 (VSPTSLPQNERGSP) are enriched in polar residues.

This sequence belongs to the RnpA family. As to quaternary structure, consists of a catalytic RNA component (M1 or rnpB) and a protein subunit.

It carries out the reaction Endonucleolytic cleavage of RNA, removing 5'-extranucleotides from tRNA precursor.. Functionally, RNaseP catalyzes the removal of the 5'-leader sequence from pre-tRNA to produce the mature 5'-terminus. It can also cleave other RNA substrates such as 4.5S RNA. The protein component plays an auxiliary but essential role in vivo by binding to the 5'-leader sequence and broadening the substrate specificity of the ribozyme. This chain is Ribonuclease P protein component, found in Chloroflexus aggregans (strain MD-66 / DSM 9485).